Here is a 303-residue protein sequence, read N- to C-terminus: MKLVLFLNMGGATNLQDCEVFLKNMFNDPYILGIKNRFLRKFVAWIITKARVKAMQENYKKMGGKSPLNELTQSLCDKLNLKQDEFKFDFVNLYVPPFATEILQKYTLNASDEIILFPLYPHHSCTTVTSSLEVLQNEISKQKIQAKVKTIDIFYKNELYNEMIVSHILDKKSKFDAKILIFSAHSLPQSIIDKGDLYEKHVNDHVEILKEKLKDHFDEFILAYQSKLGPVKWLEPNTSDVLANLNDKALIYPISFCIDCSETIFELGMEYKHLAKCDYDLISCPNNSDEFMKFILKYLSDLN.

Fe cation-binding residues include histidine 185 and glutamate 262.

This sequence belongs to the ferrochelatase family.

It is found in the cytoplasm. It carries out the reaction heme b + 2 H(+) = protoporphyrin IX + Fe(2+). Its pathway is porphyrin-containing compound metabolism; protoheme biosynthesis; protoheme from protoporphyrin-IX: step 1/1. Its function is as follows. Catalyzes the ferrous insertion into protoporphyrin IX. The protein is Ferrochelatase of Campylobacter jejuni (strain RM1221).